Consider the following 306-residue polypeptide: Ribonuclease Z (306 aa).

Residues His63, His65, Asp67, His68, His142, Asp213, and His271 each contribute to the Zn(2+) site. Residue Asp67 is the Proton acceptor of the active site.

The protein belongs to the RNase Z family. As to quaternary structure, homodimer. The cofactor is Zn(2+).

The catalysed reaction is Endonucleolytic cleavage of RNA, removing extra 3' nucleotides from tRNA precursor, generating 3' termini of tRNAs. A 3'-hydroxy group is left at the tRNA terminus and a 5'-phosphoryl group is left at the trailer molecule.. Zinc phosphodiesterase, which displays some tRNA 3'-processing endonuclease activity. Probably involved in tRNA maturation, by removing a 3'-trailer from precursor tRNA. The chain is Ribonuclease Z from Oceanobacillus iheyensis (strain DSM 14371 / CIP 107618 / JCM 11309 / KCTC 3954 / HTE831).